Reading from the N-terminus, the 435-residue chain is GTPase Der (435 aa).

2 EngA-type G domains span residues 4–167 (PIVA…SPDA) and 175–350 (ISFS…ENKN). GTP is bound by residues 10-17 (GQPNVGKS), 57-61 (DTGGI), 119-122 (NKAD), 181-188 (GRPNVGKS), 228-232 (DTAGI), and 293-296 (NKWD). The 85-residue stretch at 351 to 435 (QRIQSSVLND…PIKILPRKRK (85 aa)) folds into the KH-like domain.

Belongs to the TRAFAC class TrmE-Era-EngA-EngB-Septin-like GTPase superfamily. EngA (Der) GTPase family. Associates with the 50S ribosomal subunit.

GTPase that plays an essential role in the late steps of ribosome biogenesis. The chain is GTPase Der from Lactobacillus delbrueckii subsp. bulgaricus (strain ATCC 11842 / DSM 20081 / BCRC 10696 / JCM 1002 / NBRC 13953 / NCIMB 11778 / NCTC 12712 / WDCM 00102 / Lb 14).